Consider the following 53-residue polypeptide: Sec-independent protein translocase protein TatA (53 aa).

The chain crosses the membrane as a helical span at residues 1-21; the sequence is MGMSFSHLLIVLLIIFVLFGA.

Belongs to the TatA/E family. As to quaternary structure, the Tat system comprises two distinct complexes: a TatABC complex, containing multiple copies of TatA, TatB and TatC subunits, and a separate TatA complex, containing only TatA subunits. Substrates initially bind to the TatABC complex, which probably triggers association of the separate TatA complex to form the active translocon.

It is found in the cell inner membrane. Part of the twin-arginine translocation (Tat) system that transports large folded proteins containing a characteristic twin-arginine motif in their signal peptide across membranes. TatA could form the protein-conducting channel of the Tat system. This Rickettsia typhi (strain ATCC VR-144 / Wilmington) protein is Sec-independent protein translocase protein TatA.